Consider the following 102-residue polypeptide: uncharacterized protein (102 aa).

The interval 79-102 (AELLHPSPAPMPPATHGRSAAPCS) is disordered.

This is an uncharacterized protein from Homo sapiens (Human).